The primary structure comprises 187 residues: MNLTNHFLVAMPSMKDPYFKRSVIYICEHNQDGAMGLMINAPIDITVGGMLKQVDIEPAYPQSHQENLKKPVFNGGPVSEDRGFILHRPRDHYESSMKMTDDIAVTTSKDILTVLGTEAEPEGYIVALGYSGWSAGQLEVELTENSWLTIEADPELIFNTPVHEKWQKAIQKLGISPAQLSSDAGHA.

Belongs to the UPF0301 (AlgH) family.

The protein is UPF0301 protein VC_0467 of Vibrio cholerae serotype O1 (strain ATCC 39315 / El Tor Inaba N16961).